The following is a 401-amino-acid chain: Adenylosuccinate synthetase (401 aa).

Residues 11–17 (GDEGKGK) and 39–41 (GHT) each bind GTP. D12 (proton acceptor) is an active-site residue. Positions 12 and 39 each coordinate Mg(2+). Residues 12 to 15 (DEGK), 37 to 40 (NAGH), T127, R141, Q212, T227, and R290 contribute to the IMP site. H40 acts as the Proton donor in catalysis. 286–292 (ATTGRPR) is a binding site for substrate. GTP contacts are provided by residues R292, 318-320 (KGD), and 390-392 (SVG).

It belongs to the adenylosuccinate synthetase family. As to quaternary structure, homodimer. Mg(2+) serves as cofactor.

Its subcellular location is the cytoplasm. It carries out the reaction IMP + L-aspartate + GTP = N(6)-(1,2-dicarboxyethyl)-AMP + GDP + phosphate + 2 H(+). It participates in purine metabolism; AMP biosynthesis via de novo pathway; AMP from IMP: step 1/2. Its function is as follows. Plays an important role in the de novo pathway of purine nucleotide biosynthesis. Catalyzes the first committed step in the biosynthesis of AMP from IMP. In Thermosipho africanus (strain TCF52B), this protein is Adenylosuccinate synthetase.